The following is an 85-amino-acid chain: Small ribosomal subunit protein bS20 (85 aa).

The protein belongs to the bacterial ribosomal protein bS20 family.

In terms of biological role, binds directly to 16S ribosomal RNA. This is Small ribosomal subunit protein bS20 from Borrelia hermsii (strain HS1 / DAH).